We begin with the raw amino-acid sequence, 305 residues long: Maximins-S type B/C (305 aa).

A signal peptide spans 1–18 (MNFNYFILVLFFITSGHA). 2 consecutive propeptides follow at residues 19 to 35 (KSETREVHQEAENHIKR) and 52 to 65 (SAEEQNLAEHLVTR). Asparagine 83 bears the Asparagine amide mark. A propeptide spanning residues 87–100 (SAEEQDLAEHLVTR) is cleaved from the precursor. The residue at position 118 (asparagine 118) is an Asparagine amide. The propeptide occupies 122-135 (SAEEQDLAEDLVTR). Lysine 153 is subject to Lysine amide. A propeptide spanning residues 157-170 (SAEDQDLAEDLVTR) is cleaved from the precursor. Asparagine 188 is subject to Asparagine amide. Positions 192 to 205 (SAEEQDLAEHLVTR) are excised as a propeptide. Asparagine amide is present on asparagine 223. The propeptide occupies 227–240 (SAEEQDLSEDLVTR). Residue asparagine 258 is modified to Asparagine amide. Residues 262–275 (SAEEQDLVEDLVTR) constitute a propeptide that is removed on maturation. At lysine 293 the chain carries Lysine amide. Positions 297-305 (SAEQEKDMK) are excised as a propeptide.

This sequence belongs to the maximin-S family. As to expression, expressed by the skin dorsal glands.

Its subcellular location is the secreted. Functionally, maximin-S1 has no antimicrobial activity. Has no hemolytic activity. Its function is as follows. Maximin-S2 has an activity against mycoplasma but has no activity against common Gram-positive and Gram-negative bacteria nor fungi. Has no hemolytic activity. Maximin-S3 has an activity against mycoplasma but has no activity against common Gram-positive and Gram-negative bacteria nor fungi. Has no hemolytic activity. In terms of biological role, maximin-S4 has an activity against mycoplasma but has no activity against common Gram-positive and Gram-negative bacteria nor fungi. Has no hemolytic activity. Functionally, maximin-S5 has an activity against mycoplasma but has no activity against common Gram-positive and Gram-negative bacteria nor fungi. Has no hemolytic activity. This chain is Maximins-S type B/C, found in Bombina maxima (Giant fire-bellied toad).